We begin with the raw amino-acid sequence, 301 residues long: tRNA dimethylallyltransferase (301 aa).

12-19 (GPTASGKT) is an ATP binding site. 14–19 (TASGKT) contributes to the substrate binding site. The segment at 37–40 (DSLS) is interaction with substrate tRNA.

The protein belongs to the IPP transferase family. Monomer. Mg(2+) is required as a cofactor.

The enzyme catalyses adenosine(37) in tRNA + dimethylallyl diphosphate = N(6)-dimethylallyladenosine(37) in tRNA + diphosphate. Its function is as follows. Catalyzes the transfer of a dimethylallyl group onto the adenine at position 37 in tRNAs that read codons beginning with uridine, leading to the formation of N6-(dimethylallyl)adenosine (i(6)A). The protein is tRNA dimethylallyltransferase of Sulfurovum sp. (strain NBC37-1).